The following is an 83-amino-acid chain: Retinal cone rhodopsin-sensitive cGMP 3',5'-cyclic phosphodiesterase subunit gamma (83 aa).

The disordered stretch occupies residues 1-54 (MSDSPSLSPPAPSQGPTTPRKGPPKFKQRQTRQFKSKPPKKGVKGFGDDIPGME). Basic residues predominate over residues 22–43 (GPPKFKQRQTRQFKSKPPKKGV).

The protein belongs to the rod/cone cGMP-PDE gamma subunit family. In terms of assembly, tetramer composed of two catalytic chains (alpha and beta), and two inhibitory chains (gamma).

It catalyses the reaction 3',5'-cyclic GMP + H2O = GMP + H(+). Participates in processes of transmission and amplification of the visual signal. cGMP-PDEs are the effector molecules in G-protein-mediated phototransduction in vertebrate rods and cones. In Mus musculus (Mouse), this protein is Retinal cone rhodopsin-sensitive cGMP 3',5'-cyclic phosphodiesterase subunit gamma (Pde6h).